Consider the following 138-residue polypeptide: Cellular retinoic acid-binding protein 2 (138 aa).

A Nuclear localization signal motif is present at residues 21 to 31; sequence KALGVNMMMRK. A Glycyl lysine isopeptide (Lys-Gly) (interchain with G-Cter in SUMO) cross-link involves residue K102. 133 to 135 is an all-trans-retinoate binding site; it reads RVY.

The protein belongs to the calycin superfamily. Fatty-acid binding protein (FABP) family. In terms of assembly, interacts with importin alpha. Interacts with RXR and RARA. Post-translationally, sumoylated in response to retinoic acid binding, sumoylation is critical for dissociation from ER and subsequent nuclear translocation. Embryo and skin of adult mouse.

Its subcellular location is the cytoplasm. It localises to the endoplasmic reticulum. The protein resides in the nucleus. Its function is as follows. Transports retinoic acid to the nucleus. Regulates the access of retinoic acid to the nuclear retinoic acid receptors. The chain is Cellular retinoic acid-binding protein 2 (Crabp2) from Mus musculus (Mouse).